The following is a 46-amino-acid chain: Major cold shock protein (46 aa).

In terms of domain architecture, CSD spans 1–46 (EKGFGFLTQNNGGADVFVHFRAIASEGFKTLTEGQKVSFDVEQGQK).

As to quaternary structure, homodimer.

It is found in the cytoplasm. The sequence is that of Major cold shock protein (cspA) from Photobacterium leiognathi subsp. mandapamensis (Photobacterium mandapamensis).